A 130-amino-acid chain; its full sequence is Small ribosomal subunit protein uS8 (130 aa).

It belongs to the universal ribosomal protein uS8 family. Part of the 30S ribosomal subunit. Contacts proteins S5 and S12.

Functionally, one of the primary rRNA binding proteins, it binds directly to 16S rRNA central domain where it helps coordinate assembly of the platform of the 30S subunit. In Buchnera aphidicola subsp. Acyrthosiphon pisum (strain 5A), this protein is Small ribosomal subunit protein uS8.